The sequence spans 838 residues: MGRKLDLSGLSNNEAEHVLRVVQRDMQLRKKEEERLSEMKQELEEEGSRCLLLSKQQKFNEHCCIRCCSPFTFLLNPKRQCLDCHYNICKSCCSYSQSERGYICAACQKSRHLRTQSLEWFYNNVKSRFKRFGSAKVLKTLYRKHIIERGALSELPEVSAHEGSNDNGSICDGSDSTLYKQSEGHSMADTLTVALRVAEEAIEEAIAKAENYKDSLEKQNEARYLHEHKEELIEELATTIVQKIIQRGKRPEIQEEYEFVWPQNQKSELPSPTSTQNPLATQNSHSTSQPGAVAQSDISKRSRSAYSSDDSPEKGPEVGMAPGVPKSTEVETDIQNYSSLRRESRALSLPGWKSVDRLENSSASSVLQSPDGNWIALQSSQHSRPSLLTKRKSLVFSVLEKESGVVSAYDEMGSDSDPEDQGGWGAALLQFRRRLSDETYYTDSQHDPEWTFTQHPPITSPSSGQYTNTETLNSDSETSPSPSTRARRAPVMKKGPPETHLYPYYRHPADIVALPQLKPDVLDVNFNPHLGGDSSDGEERSEQVKRSRRRRKSKRETSEHSRAHNALYSAATAENSTVLLNAMMMRRQQSQENTVPLNHQTPDSVTSPDILTFNNMSPEPEYQNTLAHNSSAASLPLLSQLGSNNPGFAPQDPLLRAFPVNETLEEELKYKLSELIGQVSERDVKSSDFEPISEVGNKQEDRVSEKDSGKLRPKERRESKRESKLREMEKQSERQTVKLMDTSDAVRQINIERQMKKERERQRDIERQVERERERQRELEKQIEKDRERRREIEMQVEKKQERQKEMEKQLKQEQERQSEIERDLEKKRKSIRMEKRN.

In terms of domain architecture, RabBD spans 4–124; sequence KLDLSGLSNN…TQSLEWFYNN (121 aa). The FYVE-type zinc-finger motif lies at 58–112; it reads KFNEHCCIRCCSPFTFLLNPKRQCLDCHYNICKSCCSYSQSERGYICAACQKSRH. Residues 188-237 adopt a coiled-coil conformation; the sequence is ADTLTVALRVAEEAIEEAIAKAENYKDSLEKQNEARYLHEHKEELIEELA. Polar residues-rich tracts occupy residues 263-290 and 451-484; these read QNQK…TSQP and TFTQ…SPST. Disordered stretches follow at residues 263–331, 444–501, 525–570, and 681–838; these read QNQK…TEVE, SQHD…ETHL, NFNP…LYSA, and ERDV…EKRN. Composition is skewed to basic and acidic residues over residues 697-736 and 753-838; these read NKQE…ERQT and RQMK…EKRN. Residues 714–833 adopt a coiled-coil conformation; it reads KERRESKRES…DLEKKRKSIR (120 aa).

In terms of assembly, interacts with prkar2aa.

It is found in the cytoplasm. Its subcellular location is the perinuclear region. It localises to the cytoplasmic vesicle. The protein localises to the secretory vesicle. Its function is as follows. May link secretory vesicles to actin filaments. May function as a protein kinase A-anchoring protein (AKAP). May act as a scaffolding protein that links PKA to components of the exocytosis machinery, thus facilitating exocytosis. The polypeptide is Rab effector MyRIP (myrip) (Danio rerio (Zebrafish)).